Reading from the N-terminus, the 390-residue chain is Na(+)/H(+) antiporter NhaA (390 aa).

11 helical membrane passes run 13 to 33, 61 to 81, 99 to 119, 129 to 149, 158 to 178, 181 to 201, 209 to 229, 259 to 279, 297 to 317, 330 to 350, and 367 to 387; these read FQLEAASGLVLLIAAIIALVI, LSVHHWINDLLMAIFFFFVTL, LLPIIGAVGGMVVPALVYVFI, GWAIPSATDIAFSLGILSLLG, VFLTALAIIDDLGAILIIAFF, GDLSISYLSLILISYILLLTL, FIPYLIIGAFMWFFTYKSGIH, AISPYVAFIIMPIFAFANAGV, ILLGLFVGKQVGVMVVSFIAV, WLSLYGVSILTGVGFTMSLFV, and IGVLAGSLLSTVFGYFILLYA.

The protein belongs to the NhaA Na(+)/H(+) (TC 2.A.33) antiporter family.

The protein localises to the cell inner membrane. It catalyses the reaction Na(+)(in) + 2 H(+)(out) = Na(+)(out) + 2 H(+)(in). Na(+)/H(+) antiporter that extrudes sodium in exchange for external protons. The protein is Na(+)/H(+) antiporter NhaA of Pelagibacter ubique (strain HTCC1062).